The sequence spans 508 residues: ATP synthase subunit alpha, chloroplastic (508 aa).

Position 172-179 (G172–T179) interacts with ATP.

This sequence belongs to the ATPase alpha/beta chains family. In terms of assembly, F-type ATPases have 2 components, CF(1) - the catalytic core - and CF(0) - the membrane proton channel. CF(1) has five subunits: alpha(3), beta(3), gamma(1), delta(1), epsilon(1). CF(0) has four main subunits: a, b, b' and c.

It localises to the plastid. The protein resides in the chloroplast thylakoid membrane. It catalyses the reaction ATP + H2O + 4 H(+)(in) = ADP + phosphate + 5 H(+)(out). Produces ATP from ADP in the presence of a proton gradient across the membrane. The alpha chain is a regulatory subunit. The protein is ATP synthase subunit alpha, chloroplastic of Psilotum nudum (Whisk fern).